The sequence spans 129 residues: L5 homolog (129 aa).

The helical; Signal-anchor for type III membrane protein transmembrane segment at 27-47 (YFYILVFEVIVALIILNFFFK) threads the bilayer. C76 and C106 are joined by a disulfide.

Belongs to the chordopoxvirinae L5 family. In terms of assembly, part of a stable entry-fusion complex (EFC) which is at least composed of proteins A16, A21, A28, G3, G9, H2, J5, and L5. Formation of the viral membrane is necessary for the assembly of the complex. Interacts with G3. In terms of processing, most cysteines are linked by disulfide bonds. They are created by the viral disulfide bond formation pathway, a poxvirus-specific redox pathway that operates on the cytoplasmic side of the MV membranes.

Its subcellular location is the virion membrane. Its function is as follows. Envelope protein part of the entry-fusion complex responsible for the virus membrane fusion with host cell membrane during virus entry. Also plays a role in cell-cell fusion (syncytium formation). The sequence is that of L5 homolog from Fowlpox virus (strain NVSL) (FPV).